Reading from the N-terminus, the 648-residue chain is Probable alpha-galactosidase D (648 aa).

Residues 1–17 (MESIVWLLLLSPALVAG) form the signal peptide. N-linked (GlcNAc...) asparagine glycosylation is found at N84 and N90. A disulfide bond links C123 and C156. The Nucleophile role is filled by D154. 199 to 203 (EWGID) provides a ligand contact to substrate. The Proton donor role is filled by D221. 3 N-linked (GlcNAc...) asparagine glycosylation sites follow: N339, N505, and N572.

It belongs to the glycosyl hydrolase 27 family.

It localises to the secreted. It catalyses the reaction Hydrolysis of terminal, non-reducing alpha-D-galactose residues in alpha-D-galactosides, including galactose oligosaccharides, galactomannans and galactolipids.. Functionally, hydrolyzes a variety of simple alpha-D-galactoside as well as more complex molecules such as oligosaccharides and polysaccharides. This chain is Probable alpha-galactosidase D (aglD), found in Neosartorya fischeri (strain ATCC 1020 / DSM 3700 / CBS 544.65 / FGSC A1164 / JCM 1740 / NRRL 181 / WB 181) (Aspergillus fischerianus).